Reading from the N-terminus, the 127-residue chain is Fluoride-specific ion channel FluC (127 aa).

4 helical membrane-spanning segments follow: residues 8-28, 37-57, 68-88, and 100-120; these read LLIA…QYWF, PWGT…VYAI, WKFL…TFSY, and ILFL…AFAG. 2 residues coordinate Na(+): Gly78 and Thr81.

The protein belongs to the fluoride channel Fluc/FEX (TC 1.A.43) family.

The protein localises to the cell inner membrane. It catalyses the reaction fluoride(in) = fluoride(out). Na(+) is not transported, but it plays an essential structural role and its presence is essential for fluoride channel function. Fluoride-specific ion channel. Important for reducing fluoride concentration in the cell, thus reducing its toxicity. This chain is Fluoride-specific ion channel FluC, found in Leptospira interrogans serogroup Icterohaemorrhagiae serovar copenhageni (strain Fiocruz L1-130).